We begin with the raw amino-acid sequence, 238 residues long: Probable transcriptional regulatory protein CT_457 (238 aa).

The segment at 1-21 (MAGHSKWANTKHRKERADHKK) is disordered. Positions 9–21 (NTKHRKERADHKK) are enriched in basic residues.

Belongs to the TACO1 family.

It localises to the cytoplasm. The polypeptide is Probable transcriptional regulatory protein CT_457 (Chlamydia trachomatis serovar D (strain ATCC VR-885 / DSM 19411 / UW-3/Cx)).